The chain runs to 400 residues: Nicotinate phosphoribosyltransferase (400 aa).

His220 is modified (phosphohistidine; by autocatalysis).

It belongs to the NAPRTase family. Transiently phosphorylated on a His residue during the reaction cycle. Phosphorylation strongly increases the affinity for substrates and increases the rate of nicotinate D-ribonucleotide production. Dephosphorylation regenerates the low-affinity form of the enzyme, leading to product release.

The catalysed reaction is nicotinate + 5-phospho-alpha-D-ribose 1-diphosphate + ATP + H2O = nicotinate beta-D-ribonucleotide + ADP + phosphate + diphosphate. The protein operates within cofactor biosynthesis; NAD(+) biosynthesis; nicotinate D-ribonucleotide from nicotinate: step 1/1. Catalyzes the synthesis of beta-nicotinate D-ribonucleotide from nicotinate and 5-phospho-D-ribose 1-phosphate at the expense of ATP. The protein is Nicotinate phosphoribosyltransferase of Salmonella typhi.